The sequence spans 259 residues: Ras-related protein Rab-34 (259 aa).

Position 1 is an N-acetylmethionine (Met-1). Ser-62, Val-63, Gly-64, Lys-65, Thr-66, Asp-78, Tyr-81, and Thr-84 together coordinate GTP. Thr-66 is a Mg(2+) binding site. The Switch 1 signature appears at 71–89 (RFCKDTFDKNYKATIGVDF). Mg(2+) contacts are provided by Thr-84 and Asp-107. The Switch 2 signature appears at 108–127 (TAGQERFKCIASTYYRGAQA). GTP is bound by residues Gly-110, Lys-167, Asp-169, and Ser-198. Phosphoserine is present on Ser-241. S-geranylgeranyl cysteine attachment occurs at residues Cys-257 and Cys-258.

This sequence belongs to the small GTPase superfamily. Rab family. Interacts with RILP. The GTP-bound form interacts with REP15. Mg(2+) serves as cofactor.

It localises to the cytoplasm. The protein localises to the golgi apparatus. Its subcellular location is the cytoplasmic vesicle. It is found in the phagosome. The protein resides in the phagosome membrane. It localises to the cell projection. The protein localises to the cilium. Its subcellular location is the cytoskeleton. It is found in the microtubule organizing center. The protein resides in the centrosome. It localises to the centriole. It carries out the reaction GTP + H2O = GDP + phosphate + H(+). Regulated by guanine nucleotide exchange factors (GEFs) which promote the exchange of bound GDP for free GTP. Regulated by GTPase activating proteins (GAPs) which increase the GTP hydrolysis activity. Inhibited by GDP dissociation inhibitors (GDIs). In terms of biological role, the small GTPases Rab are key regulators of intracellular membrane trafficking, from the formation of transport vesicles to their fusion with membranes. Rabs cycle between an inactive GDP-bound form and an active GTP-bound form that is able to recruit to membranes different sets of downstream effectors directly responsible for vesicle formation, movement, tethering and fusion. RAB34 transports protein involved in the redistribution of lysosomes to the peri-Golgi region. Plays a role in the maturation of phagosomes that engulf pathogens, such as S.aureus and M.tuberculosis. Plays a role in the fusion of phagosomes with lysosomes. Required for the early steps of intracellular ciliogenesis, the cilium assembly pathway initiated by trafficking and docking of ciliary vesicles to the centrioles in the cytoplasm, followed by axoneme formation in the cytoplasm. After axoneme elongation, the centrioles migrate close to the cell surface so that ciliary vesicles can fuse with the plasma membrane to expose cilia to the extracellular space. It seems dispensable for ciliogenesis via the extracellular pathway where cilium assembly begins after migration and docking of the centriole to the plasma membrane. Also acts as a positive regulator of hedgehog signaling and regulates ciliary function. In Mus musculus (Mouse), this protein is Ras-related protein Rab-34.